The primary structure comprises 183 residues: Auxin-responsive protein IAA20 (183 aa).

Disordered stretches follow at residues 1 to 23 (MELE…TATA) and 42 to 77 (GFEE…NKRR). The EAR-like (transcriptional repression) signature appears at 3–7 (LELGL). Residues 98–183 (GGYVKVKMEG…KSVKRLKILV (86 aa)) form the PB1 domain.

It belongs to the Aux/IAA family. In terms of assembly, homodimers and heterodimers. In terms of tissue distribution, expressed at very low levels in etiolated seedlings and flowers.

The protein resides in the nucleus. Aux/IAA proteins are short-lived transcriptional factors that function as repressors of early auxin response genes at low auxin concentrations. This Oryza sativa subsp. japonica (Rice) protein is Auxin-responsive protein IAA20 (IAA20).